A 245-amino-acid chain; its full sequence is ATP synthase subunit a, chloroplastic (245 aa).

The next 5 membrane-spanning stretches (helical) occupy residues 34–54 (TLMT…LSNL), 93–113 (VPFL…GALL), 132–152 (INTT…AGIS), 197–217 (LVIA…LMLL), and 218–238 (GLFT…AYIG).

The protein belongs to the ATPase A chain family. As to quaternary structure, F-type ATPases have 2 components, CF(1) - the catalytic core - and CF(0) - the membrane proton channel. CF(1) has five subunits: alpha(3), beta(3), gamma(1), delta(1), epsilon(1). CF(0) has four main subunits: a, b, b' and c.

The protein resides in the plastid. Its subcellular location is the chloroplast thylakoid membrane. In terms of biological role, key component of the proton channel; it plays a direct role in the translocation of protons across the membrane. The protein is ATP synthase subunit a, chloroplastic of Bigelowiella natans (Pedinomonas minutissima).